The following is a 69-amino-acid chain: Protein transport protein Sec61 subunit gamma (69 aa).

The Cytoplasmic portion of the chain corresponds to 1 to 32; sequence MDAVDSVVDPLREFAKDSVRLVKRCHKPDRKE. A helical membrane pass occupies residues 33-61; that stretch reads FTKVAARTAIGFVVMGFVGFFVKLIFIPI. Topologically, residues 62 to 69 are extracellular; that stretch reads NNIIVGSG.

The protein belongs to the SecE/SEC61-gamma family. In terms of assembly, heterotrimeric complex composed of SEC61-alpha, SEC61-beta and SEC61-gamma.

It localises to the endoplasmic reticulum membrane. In terms of biological role, necessary for protein translocation in the endoplasmic reticulum. This chain is Protein transport protein Sec61 subunit gamma, found in Oryza sativa subsp. japonica (Rice).